The sequence spans 959 residues: Autophagy-related protein 18g (959 aa).

WD repeat units follow at residues 376–416 (AHTS…SHNA) and 438–479 (ITSA…AAFQ). Positions 802 to 832 (GSIESAESSEEGSTKQMENLHDSDHMSNSIK) are disordered.

It belongs to the WD repeat PROPPIN family. In terms of assembly, component of the PI(3,5)P2 regulatory complex at least composed of ATG18, SAC/FIG4, FAB1 and VAC14. In terms of tissue distribution, expressed in leaves.

The protein resides in the preautophagosomal structure membrane. It is found in the vacuole membrane. The PI(3,5)P2 regulatory complex regulates both the synthesis and turnover of phosphatidylinositol 3,5-bisphosphate (PtdIns(3,5)P2). Required for autophagy. The chain is Autophagy-related protein 18g (ATG18G) from Arabidopsis thaliana (Mouse-ear cress).